Consider the following 52-residue polypeptide: Large ribosomal subunit protein bL32c (52 aa).

The protein belongs to the bacterial ribosomal protein bL32 family.

It is found in the plastid. The protein resides in the chloroplast. This is Large ribosomal subunit protein bL32c from Capsella bursa-pastoris (Shepherd's purse).